The sequence spans 213 residues: Methylthioribulose-1-phosphate dehydratase (213 aa).

Zn(2+) is bound by residues His-97 and His-99.

This sequence belongs to the aldolase class II family. MtnB subfamily. As to quaternary structure, homotetramer. The cofactor is Zn(2+).

The catalysed reaction is 5-(methylsulfanyl)-D-ribulose 1-phosphate = 5-methylsulfanyl-2,3-dioxopentyl phosphate + H2O. The protein operates within amino-acid biosynthesis; L-methionine biosynthesis via salvage pathway; L-methionine from S-methyl-5-thio-alpha-D-ribose 1-phosphate: step 2/6. Functionally, catalyzes the dehydration of methylthioribulose-1-phosphate (MTRu-1-P) into 2,3-diketo-5-methylthiopentyl-1-phosphate (DK-MTP-1-P). The sequence is that of Methylthioribulose-1-phosphate dehydratase from Geobacillus sp. (strain WCH70).